Consider the following 148-residue polypeptide: MQVILKEDVVNLGYKDDIVTVKDGYGRNFLIPTGKAVIASESAKKVLAENLKQRAHKLAKIKEDAQTLAAKLEGVALTIGAKTSSTGTIFGSVTNIQVAEALAKAGFENIDRKIIYIKESVKEVGSYKAVLKLHKEVSVEVPFEVVSE.

It belongs to the bacterial ribosomal protein bL9 family.

Binds to the 23S rRNA. The protein is Large ribosomal subunit protein bL9 of Parabacteroides distasonis (strain ATCC 8503 / DSM 20701 / CIP 104284 / JCM 5825 / NCTC 11152).